Here is a 116-residue protein sequence, read N- to C-terminus: MRHRCRVPRLGKPADQRKALLRALTTELIRHGRITTTKVRAKAVRSEVDRMITLAKDGSLAARRQALGYLYDPQLVGALFEQASARYGQRQGGYTRIIRTIPRRGDNAEMAIIELV.

It belongs to the bacterial ribosomal protein bL17 family. Part of the 50S ribosomal subunit. Contacts protein L32.

The protein is Large ribosomal subunit protein bL17 of Cyanothece sp. (strain PCC 7425 / ATCC 29141).